The primary structure comprises 513 residues: uncharacterized protein (513 aa).

Residues 1–48 (MGSSEEQSVPGDDFYEESGDLNTGLSLVLRPAKSNEGESSLSSPKGSK) form a disordered region. A compositionally biased stretch (polar residues) spans 37–48 (GESSLSSPKGSK). 3 positions are modified to phosphoserine: Ser43, Ser84, and Ser123. 4 disordered regions span residues 210 to 229 (DGNH…GDLA), 236 to 287 (TRDS…GSKS), 390 to 414 (AKED…AEPP), and 453 to 481 (SVLS…TQGC).

This is an uncharacterized protein from Mus musculus (Mouse).